Here is a 352-residue protein sequence, read N- to C-terminus: Trifunctional sesterterpene/triterpene/sesquarterpene synthase (352 aa).

The protein belongs to the large terpene synthase family.

The catalysed reaction is (2E,6E,10E,14E)-geranylfarnesyl diphosphate = beta-geranylfarnesene + diphosphate. It carries out the reaction all-trans-hexaprenyl diphosphate = beta-hexaprene + diphosphate. It catalyses the reaction all-trans-heptaprenyl diphosphate = beta-heptaprene + diphosphate. Functionally, catalyzes the conversion of geranylfarnesyl diphosphate (GFPP) and hexaprenyl diphosphate (HexPP) into beta-geranylfarnesene and beta-hexaprene, respectively. Also produces beta-heptaprene from heptaprenyl diphosphate (HepPP) as a minor product. The chain is Trifunctional sesterterpene/triterpene/sesquarterpene synthase from Shouchella clausii (Alkalihalobacillus clausii).